Here is a 283-residue protein sequence, read N- to C-terminus: SNF1-related protein kinase regulatory subunit beta-1 (283 aa).

The segment covering 1–10 (MGNANGKDED) has biased composition (basic and acidic residues). Residues 1–63 (MGNANGKDED…PARSPSPFLF (63 aa)) form a disordered region. G2 carries the N-myristoyl glycine lipid modification. Residues 43–60 (SDSMSSSPPGSPARSPSP) are compositionally biased toward low complexity. The segment at 101–178 (PTIITWNQGG…VGNVCNILDV (78 aa)) is kinase-interacting sequence (KIS). Positions 215–283 (EPLAVPPQLH…TVVLYKPLTR (69 aa)) are association with SNF1 complex (ASC).

This sequence belongs to the 5'-AMP-activated protein kinase beta subunit family. As to quaternary structure, subunit of a probable heterotrimeric complex consisting of an alpha catalytic (KIN10 or KIN11) subunit, and a beta (KINB) and a gamma (KING or SNF4) non-catalytic regulatory subunits. Interacts with SNF4 and CBL1. Interacts with FLZ1, FLZ2, FLZ8, FLZ9, FLZ10, FLZ12, FLZ13, FLZ14 and FLZ15. In terms of processing, sumoylated by SIZ1. Expressed in vegetative organs and, to lower extent, in reproductive organs.

The protein resides in the cell membrane. Regulatory subunit of the probable trimeric SNF1-related protein kinase (SnRK) complex, which may play a role in a signal transduction cascade regulating gene expression and carbohydrate metabolism in higher plants. The SnRK complex may also be involved in the regulation of fatty acid synthesis by phosphorylation of acetyl-CoA carboxylase and in assimilation of nitrogen by phosphorylating nitrate reductase. In Arabidopsis thaliana (Mouse-ear cress), this protein is SNF1-related protein kinase regulatory subunit beta-1 (KINB1).